A 93-amino-acid chain; its full sequence is YcgL domain-containing protein KPK_1976 (93 aa).

The YcgL domain maps to 1-85 (MFCVIYRSTK…PSENLLKKHL (85 aa)).

The protein is YcgL domain-containing protein KPK_1976 of Klebsiella pneumoniae (strain 342).